Here is a 208-residue protein sequence, read N- to C-terminus: FMN-dependent NADH:quinone oxidoreductase 1 (208 aa).

17 to 19 (SVS) provides a ligand contact to FMN.

This sequence belongs to the azoreductase type 1 family. As to quaternary structure, homodimer. The cofactor is FMN.

It carries out the reaction 2 a quinone + NADH + H(+) = 2 a 1,4-benzosemiquinone + NAD(+). The catalysed reaction is N,N-dimethyl-1,4-phenylenediamine + anthranilate + 2 NAD(+) = 2-(4-dimethylaminophenyl)diazenylbenzoate + 2 NADH + 2 H(+). Its function is as follows. Quinone reductase that provides resistance to thiol-specific stress caused by electrophilic quinones. Functionally, also exhibits azoreductase activity. Catalyzes the reductive cleavage of the azo bond in aromatic azo compounds to the corresponding amines. The sequence is that of FMN-dependent NADH:quinone oxidoreductase 1 from Listeria monocytogenes serovar 1/2a (strain ATCC BAA-679 / EGD-e).